We begin with the raw amino-acid sequence, 281 residues long: Elongation factor 1-delta (281 aa).

A2 carries the N-acetylalanine modification. K17 carries the post-translational modification N6-acetyllysine. S37, S44, S60, S86, and S106 each carry phosphoserine. A leucine-zipper region spans residues 80-115 (LVVRIASLEVENQSLRGVVQELQQAISKLEARLNVL). K107 is subject to N6-acetyllysine. The residue at position 117 (K117) is an N6-acetyllysine; alternate. At K117 the chain carries N6-succinyllysine; alternate. Residues 118–172 (SSPGHRATAPQTQHVSPMRQVEPPAKKPATPAEDDEDDDIDLFGSDNEEEDKEAA) form a disordered region. Position 119 is a phosphoserine (S119). T129 carries the post-translational modification Phosphothreonine. S133 is modified (phosphoserine). T147 carries the phosphothreonine modification. Over residues 149 to 169 (AEDDEDDDIDLFGSDNEEEDK) the composition is skewed to acidic residues. S162 is subject to Phosphoserine; by CK2. Residues 173-281 (QLREERLRQY…SVDIAAFNKI (109 aa)) are catalytic (GEF).

It belongs to the EF-1-beta/EF-1-delta family. In terms of assembly, EF-1 is composed of 4 subunits: alpha, beta, delta isoform 1, and gamma. Isoform 2 interacts with HSF1 and NFE2L2.

It is found in the nucleus. EF-1-beta and EF-1-delta stimulate the exchange of GDP bound to EF-1-alpha to GTP, regenerating EF-1-alpha for another round of transfer of aminoacyl-tRNAs to the ribosome. Its function is as follows. Regulates induction of heat-shock-responsive genes through association with heat shock transcription factors and direct DNA-binding at heat shock promoter elements (HSE). In Macaca fascicularis (Crab-eating macaque), this protein is Elongation factor 1-delta (EEF1D).